A 580-amino-acid polypeptide reads, in one-letter code: Arginine--tRNA ligase (580 aa).

The short motif at 131–141 (ANPTGPMHVGH) is the 'HIGH' region element.

This sequence belongs to the class-I aminoacyl-tRNA synthetase family. As to quaternary structure, monomer.

Its subcellular location is the cytoplasm. It carries out the reaction tRNA(Arg) + L-arginine + ATP = L-arginyl-tRNA(Arg) + AMP + diphosphate. The polypeptide is Arginine--tRNA ligase (Cereibacter sphaeroides (strain ATCC 17023 / DSM 158 / JCM 6121 / CCUG 31486 / LMG 2827 / NBRC 12203 / NCIMB 8253 / ATH 2.4.1.) (Rhodobacter sphaeroides)).